The sequence spans 252 residues: 5-oxoprolinase subunit A (252 aa).

Belongs to the LamB/PxpA family. In terms of assembly, forms a complex composed of PxpA, PxpB and PxpC.

The catalysed reaction is 5-oxo-L-proline + ATP + 2 H2O = L-glutamate + ADP + phosphate + H(+). Functionally, catalyzes the cleavage of 5-oxoproline to form L-glutamate coupled to the hydrolysis of ATP to ADP and inorganic phosphate. The polypeptide is 5-oxoprolinase subunit A (Kocuria rhizophila (strain ATCC 9341 / DSM 348 / NBRC 103217 / DC2201)).